A 361-amino-acid polypeptide reads, in one-letter code: Ankyrin repeat domain-containing protein 16 (361 aa).

ANK repeat units lie at residues 36–66, 70–99, 103–132, 136–165, 170–200, 204–234, 238–268, 273–302, and 306–335; these read AGDT…DIEA, DYKR…AVDC, ADWT…NPLL, DGWN…GAWK, IRRT…EPDY, CGVT…CLSA, LGAQ…DVDV, THLT…DINS, and KNRS…KDSE.

In terms of assembly, interacts with AARS; the interaction is direct.

It localises to the cytoplasm. It is found in the nucleus. Its function is as follows. Required to prevent the misactivation of serine (Ser) with tRNA(Ala) by promoting the hydrolysis of Ser-mischarged tRNA(Ala), thereby playing a role in translational fidelity. Binds directly to the catalytic domain of AARS/AlaRS and captures Ser that is misactivated by AARS/AlaRS, preventing the charging of Ser adenylates to tRNA(Ala) and precluding Ser misincorporation in nascent peptides. The polypeptide is Ankyrin repeat domain-containing protein 16 (Homo sapiens (Human)).